The primary structure comprises 191 residues: Protein GrpE (191 aa).

Basic and acidic residues predominate over residues 1-11 (MTDSSNAHEAE). 2 disordered regions span residues 1-22 (MTDS…DNEI) and 172-191 (KVSK…NNNE).

The protein belongs to the GrpE family. As to quaternary structure, homodimer.

The protein resides in the cytoplasm. Functionally, participates actively in the response to hyperosmotic and heat shock by preventing the aggregation of stress-denatured proteins, in association with DnaK and GrpE. It is the nucleotide exchange factor for DnaK and may function as a thermosensor. Unfolded proteins bind initially to DnaJ; upon interaction with the DnaJ-bound protein, DnaK hydrolyzes its bound ATP, resulting in the formation of a stable complex. GrpE releases ADP from DnaK; ATP binding to DnaK triggers the release of the substrate protein, thus completing the reaction cycle. Several rounds of ATP-dependent interactions between DnaJ, DnaK and GrpE are required for fully efficient folding. This Chlamydia abortus (strain DSM 27085 / S26/3) (Chlamydophila abortus) protein is Protein GrpE.